Consider the following 455-residue polypeptide: Golgi pH regulator A (455 aa).

The next 5 helical transmembrane spans lie at 5 to 25, 46 to 66, 79 to 99, 114 to 134, and 150 to 170; these read IDSSIMITSQILFFGFGWLFF, VTFAFSCTMFELIIFEILGVL, LCVILLILVFMVPFYIGYFIV, CLLWLTFMYFFWKLGDPFPIL, and VGVIGVTLMALLSGFGAVNCP. Residues asparagine 180 and asparagine 243 are each glycosylated (N-linked (GlcNAc...) asparagine). Helical transmembrane passes span 290-310, 343-363, 378-398, and 425-445; these read GYFFSIYCVWKIFMATINIVF, ISFILVGIIIVTSIRGLLITL, VIVLLLAQIMGMYFVSSVLLI, and WFDVIFLVSALSSILFLYLAH.

This sequence belongs to the Golgi pH regulator (TC 1.A.38) family. As to quaternary structure, homotrimer. Interacts with RABL3; the interaction stabilizes GPR89A. Ubiquitous.

It is found in the golgi apparatus membrane. The enzyme catalyses iodide(out) = iodide(in). The catalysed reaction is chloride(in) = chloride(out). It carries out the reaction bromide(in) = bromide(out). It catalyses the reaction fluoride(in) = fluoride(out). In terms of biological role, voltage-gated channel that enables the transfer of monoatomic anions such as iodide, chloride, bromide and fluoride which may function in counter-ion conductance and participates in Golgi acidification. Plays a role in lymphocyte development, probably by acting as a RABL3 effector in hematopoietic cells. The sequence is that of Golgi pH regulator A from Homo sapiens (Human).